Here is a 2293-residue protein sequence, read N- to C-terminus: Protein Ycf2 (2293 aa).

Position 1647–1654 (1647–1654 (GSIGTGRS)) interacts with ATP.

It belongs to the Ycf2 family.

The protein resides in the plastid. It localises to the chloroplast stroma. Probable ATPase of unknown function. Its presence in a non-photosynthetic plant (Epifagus virginiana) and experiments in tobacco indicate that it has an essential function which is probably not related to photosynthesis. The chain is Protein Ycf2 from Lobularia maritima (Sweet alyssum).